A 216-amino-acid chain; its full sequence is Pyridoxine/pyridoxamine 5'-phosphate oxidase (216 aa).

Substrate is bound by residues 12 to 15 (RKSY) and Lys-70. FMN-binding positions include 65–70 (RVVLVK), 80–81 (FT), Arg-86, and Lys-87. Substrate-binding residues include Tyr-127, Arg-131, and Ser-135. FMN-binding positions include 144 to 145 (QS) and Trp-188. Position 194–196 (194–196 (RLH)) interacts with substrate. Arg-198 contributes to the FMN binding site.

The protein belongs to the pyridoxamine 5'-phosphate oxidase family. As to quaternary structure, homodimer. The cofactor is FMN.

The catalysed reaction is pyridoxamine 5'-phosphate + O2 + H2O = pyridoxal 5'-phosphate + H2O2 + NH4(+). It catalyses the reaction pyridoxine 5'-phosphate + O2 = pyridoxal 5'-phosphate + H2O2. It functions in the pathway cofactor metabolism; pyridoxal 5'-phosphate salvage; pyridoxal 5'-phosphate from pyridoxamine 5'-phosphate: step 1/1. The protein operates within cofactor metabolism; pyridoxal 5'-phosphate salvage; pyridoxal 5'-phosphate from pyridoxine 5'-phosphate: step 1/1. Functionally, catalyzes the oxidation of either pyridoxine 5'-phosphate (PNP) or pyridoxamine 5'-phosphate (PMP) into pyridoxal 5'-phosphate (PLP). This chain is Pyridoxine/pyridoxamine 5'-phosphate oxidase, found in Polaromonas sp. (strain JS666 / ATCC BAA-500).